The chain runs to 486 residues: Glutamyl-tRNA(Gln) amidotransferase subunit A (486 aa).

Catalysis depends on charge relay system residues K79 and S154. S178 functions as the Acyl-ester intermediate in the catalytic mechanism.

The protein belongs to the amidase family. GatA subfamily. As to quaternary structure, heterotrimer of A, B and C subunits.

It carries out the reaction L-glutamyl-tRNA(Gln) + L-glutamine + ATP + H2O = L-glutaminyl-tRNA(Gln) + L-glutamate + ADP + phosphate + H(+). Its function is as follows. Allows the formation of correctly charged Gln-tRNA(Gln) through the transamidation of misacylated Glu-tRNA(Gln) in organisms which lack glutaminyl-tRNA synthetase. The reaction takes place in the presence of glutamine and ATP through an activated gamma-phospho-Glu-tRNA(Gln). This chain is Glutamyl-tRNA(Gln) amidotransferase subunit A, found in Myxococcus xanthus (strain DK1622).